Reading from the N-terminus, the 547-residue chain is Chaperonin GroEL (547 aa).

ATP is bound by residues 30–33, lysine 51, 87–91, glycine 415, and aspartate 496; these read TLGP and DGTTT.

Belongs to the chaperonin (HSP60) family. As to quaternary structure, forms a cylinder of 14 subunits composed of two heptameric rings stacked back-to-back. Interacts with the co-chaperonin GroES.

It is found in the cytoplasm. It carries out the reaction ATP + H2O + a folded polypeptide = ADP + phosphate + an unfolded polypeptide.. In terms of biological role, together with its co-chaperonin GroES, plays an essential role in assisting protein folding. The GroEL-GroES system forms a nano-cage that allows encapsulation of the non-native substrate proteins and provides a physical environment optimized to promote and accelerate protein folding. The chain is Chaperonin GroEL from Haemophilus ducreyi (strain 35000HP / ATCC 700724).